We begin with the raw amino-acid sequence, 106 residues long: Immunoglobulin lambda constant 1 (106 aa).

Residues 7-101 form the Ig-like domain; it reads PTVTLFPPSS…EGSTVEKTVA (95 aa). An intrachain disulfide couples cysteine 28 to cysteine 87.

As to quaternary structure, immunoglobulins are composed of two identical heavy chains and two identical light chains; disulfide-linked.

It is found in the secreted. Its subcellular location is the cell membrane. Its function is as follows. Constant region of immunoglobulin light chains. Immunoglobulins, also known as antibodies, are membrane-bound or secreted glycoproteins produced by B lymphocytes. In the recognition phase of humoral immunity, the membrane-bound immunoglobulins serve as receptors which, upon binding of a specific antigen, trigger the clonal expansion and differentiation of B lymphocytes into immunoglobulins-secreting plasma cells. Secreted immunoglobulins mediate the effector phase of humoral immunity, which results in the elimination of bound antigens. The antigen binding site is formed by the variable domain of one heavy chain, together with that of its associated light chain. Thus, each immunoglobulin has two antigen binding sites with remarkable affinity for a particular antigen. The variable domains are assembled by a process called V-(D)-J rearrangement and can then be subjected to somatic hypermutations which, after exposure to antigen and selection, allow affinity maturation for a particular antigen. The protein is Immunoglobulin lambda constant 1 of Homo sapiens (Human).